Here is a 488-residue protein sequence, read N- to C-terminus: Putative BPI/LBP family protein At1g04970 (488 aa).

A signal peptide spans methionine 1–serine 24. 5 N-linked (GlcNAc...) asparagine glycosylation sites follow: asparagine 79, asparagine 109, asparagine 231, asparagine 242, and asparagine 341.

It belongs to the BPI/LBP/Plunc superfamily. BPI/LBP (TC 1.C.40) family.

The sequence is that of Putative BPI/LBP family protein At1g04970 from Arabidopsis thaliana (Mouse-ear cress).